We begin with the raw amino-acid sequence, 415 residues long: Ubp4-interactor sfp47 (415 aa).

Residues Ser221 and Ser226 each carry the phosphoserine modification. At Thr231 the chain carries Phosphothreonine. A Phosphoserine modification is found at Ser235. The SH3 domain maps to 352–415 (PIFAYVRALY…PSNYIEELEY (64 aa)).

Interacts with ubp4.

It is found in the cytoplasm. Its subcellular location is the endosome. Its function is as follows. Required for the regulation of activity and recruitment of ubp4 to endosomes. In Schizosaccharomyces pombe (strain 972 / ATCC 24843) (Fission yeast), this protein is Ubp4-interactor sfp47 (sfp47).